Reading from the N-terminus, the 291-residue chain is N-acetylmannosamine kinase (291 aa).

Residues Ala-5–Lys-12 and Gly-132–Ser-139 contribute to the ATP site. Zn(2+) contacts are provided by His-156, Cys-166, Cys-168, and Cys-173.

It belongs to the ROK (NagC/XylR) family. NanK subfamily. In terms of assembly, homodimer.

It carries out the reaction an N-acyl-D-mannosamine + ATP = an N-acyl-D-mannosamine 6-phosphate + ADP + H(+). The protein operates within amino-sugar metabolism; N-acetylneuraminate degradation; D-fructose 6-phosphate from N-acetylneuraminate: step 2/5. Catalyzes the phosphorylation of N-acetylmannosamine (ManNAc) to ManNAc-6-P. The chain is N-acetylmannosamine kinase from Escherichia coli O9:H4 (strain HS).